Reading from the N-terminus, the 1530-residue chain is Multidrug resistance-associated protein 1 (1530 aa).

The Extracellular segment spans residues 1 to 33 (MALRDFCSVDGSDLFWEWNVTWNTSNPDFTKCF). N-linked (GlcNAc...) asparagine glycosylation occurs at N19. Residues 34–54 (QNTVLVWVPCSYLWVCFPFYF) form a helical membrane-spanning segment. Residues 55 to 74 (LYLSHHDRGYIQMTHLNKAK) are Cytoplasmic-facing. A helical transmembrane segment spans residues 75–95 (TALGFLLWIVCWADLFYSFWE). The Extracellular segment spans residues 96–100 (RSMGK). Residues 101 to 121 (LLAPVFLVSPTLLGITMLLAT) form a helical membrane-spanning segment. Residues 122-133 (FLIQIERRRGVQ) lie on the Cytoplasmic side of the membrane. Residues 134 to 154 (SSGIMLTFWLIALLCALAILR) form a helical membrane-spanning segment. Topologically, residues 155-172 (SKIMTALKEDARVDVFRD) are extracellular. A helical membrane pass occupies residues 173–193 (VTFYIYFSLVLIQLVLSCFSD). Residues 194–316 (RSPLFSETIN…KERDPSLFKV (123 aa)) lie on the Cytoplasmic side of the membrane. Y277 is modified (phosphotyrosine). Residue S289 is modified to Phosphoserine. Residues 317 to 337 (LYKTFGPYFLMSFLFKAVHDL) form a helical membrane-spanning segment. An ABC transmembrane type-1 1 domain is found at 325–608 (FLMSFLFKAV…LPMVISSIVQ (284 aa)). Residues 338-363 (MMFAGPEILKLLINFVNDKKAPEWQG) are Extracellular-facing. Residues 364-384 (YFYTALLFISACLQTLVLHQY) form a helical membrane-spanning segment. The Cytoplasmic portion of the chain corresponds to 385–440 (FHICFVSGMRIKTAVIGAVYRKALVITNAARKSSTVGEIVNLMSVDAQRFMDLATY). A helical membrane pass occupies residues 441 to 461 (INMIWSAPLQVILALYLLWLN). Residues 462–464 (LGP) lie on the Extracellular side of the membrane. A helical transmembrane segment spans residues 465–485 (SVLAGVAVMVLMVPLNAVMAM). At 486-547 (KTKTYQVAHM…VLKKSAYLAA (62 aa)) the chain is on the cytoplasmic side. The residue at position 503 (K503) is an N6-succinyllysine. A helical transmembrane segment spans residues 548-568 (VGTFTWVCTPFLVALSTFAVY). Over 569 to 590 (VTVDENNILDAQKAFVSLALFN) the chain is Extracellular. A helical membrane pass occupies residues 591 to 611 (ILRFPLNILPMVISSIVQASV). Topologically, residues 612–966 (SLKRLRVFLS…VKLSVYWDYM (355 aa)) are cytoplasmic. The ABC transporter 1 domain occupies 644-868 (ITVKNATFTW…DGAFAEFLRT (225 aa)). 678–685 (GQVGCGKS) provides a ligand contact to ATP. Residues 912 to 939 (RQLSSSSSYSRDVSQHHTSTAELRKPGP) are disordered. Residues S915 and S930 each carry the phosphoserine modification. The chain crosses the membrane as a helical span at residues 967 to 987 (KAIGLFISFLSIFLFLCNHVA). In terms of domain architecture, ABC transmembrane type-1 2 spans 974-1255 (SFLSIFLFLC…LVRMSSEMET (282 aa)). At 988-1024 (SLVSNYWLSLWTDDPIVNGTQEHTQVRLSVYGALGIS) the chain is on the extracellular side. N1005 carries an N-linked (GlcNAc...) asparagine glycan. Residues 1025 to 1045 (QGITVFGYSMAVSIGGIFASR) form a helical membrane-spanning segment. Over 1046-1088 (RLHLDLLHNVLRSPISFFERTPSGNLVNRFSKELDTVDSMIPQ) the chain is Cytoplasmic. A helical membrane pass occupies residues 1089-1109 (VIKMFMGSLFNVIGACIIILL). A1110 is a topological domain (extracellular). A helical membrane pass occupies residues 1111 to 1131 (TPMAAVIIPPLGLIYFFVQRF). The Cytoplasmic portion of the chain corresponds to 1132–1202 (YVASSRQLKR…VANRWLAVRL (71 aa)). The chain crosses the membrane as a helical span at residues 1203–1223 (ECVGNCIVLFASLFAVISRHS). At 1224–1225 (LS) the chain is on the extracellular side. Residues 1226 to 1246 (AGLVGLSVSYSLQVTTYLNWL) form a helical membrane-spanning segment. Over 1247 to 1530 (VRMSSEMETN…YSMAKDSGLV (284 aa)) the chain is Cytoplasmic. In terms of domain architecture, ABC transporter 2 spans 1292–1526 (VEFRDYGLRY…RGLFYSMAKD (235 aa)). Position 1326 to 1333 (1326 to 1333 (GRTGAGKS)) interacts with ATP.

The protein belongs to the ABC transporter superfamily. ABCC family. Conjugate transporter (TC 3.A.1.208) subfamily. Expressed in heart, spleen, lung, kidney, skeletal muscle, mammary gland and weaker in brain and liver.

It localises to the cell membrane. It is found in the basolateral cell membrane. The enzyme catalyses ATP + H2O + xenobioticSide 1 = ADP + phosphate + xenobioticSide 2.. It catalyses the reaction an S-substituted glutathione(in) + ATP + H2O = an S-substituted glutathione(out) + ADP + phosphate + H(+). The catalysed reaction is sphing-4-enine 1-phosphate(in) + ATP + H2O = sphing-4-enine 1-phosphate(out) + ADP + phosphate + H(+). It carries out the reaction leukotriene C4(in) + ATP + H2O = leukotriene C4(out) + ADP + phosphate + H(+). The enzyme catalyses 17beta-estradiol 17-O-(beta-D-glucuronate)(in) + ATP + H2O = 17beta-estradiol 17-O-(beta-D-glucuronate)(out) + ADP + phosphate + H(+). It catalyses the reaction daunorubicin(in) + ATP + H2O = daunorubicin(out) + ADP + phosphate + H(+). The catalysed reaction is vincristine(in) + ATP + H2O = vincristine(out) + ADP + phosphate + H(+). It carries out the reaction 2',3'-cGAMP(in) + ATP + H2O = 2',3'-cGAMP(out) + ADP + phosphate + H(+). The enzyme catalyses S-[(2E,6E,10E)-geranylgeranyl]-L-glutathione(in) + ATP + H2O = S-[(2E,6E,10E)-geranylgeranyl]-L-glutathione(out) + ADP + phosphate + H(+). It catalyses the reaction prostaglandin A2-S-(R)-glutathione(in) + ATP + H2O = prostaglandin A2-S-(R)-glutathione(out) + ADP + phosphate + H(+). The catalysed reaction is prostaglandin A2-S-(S)-glutathione(in) + ATP + H2O = prostaglandin A2-S-(S)-glutathione(out) + ADP + phosphate + H(+). Its activity is regulated as follows. MK 571 inhibits sphingosine 1-phosphate and leukotriene C4 export. Its function is as follows. Mediates export of organic anions and drugs from the cytoplasm. Mediates ATP-dependent transport of glutathione and glutathione conjugates, leukotriene C4, estradiol-17-beta-o-glucuronide, methotrexate, antiviral drugs and other xenobiotics. Confers resistance to anticancer drugs by decreasing accumulation of drug in cells, and by mediating ATP- and GSH-dependent drug export. Hydrolyzes ATP with low efficiency. Catalyzes the export of sphingosine 1-phosphate from mast cells independently of their degranulation. Participates in inflammatory response by allowing export of leukotriene C4 from leukotriene C4-synthesizing cells. Mediates ATP-dependent, GSH-independent cyclic GMP-AMP (cGAMP) export. Thus, by limiting intracellular cGAMP concentrations negatively regulates the cGAS-STING pathway. Exports S-geranylgeranyl-glutathione (GGG) in lymphoid cells and stromal compartments of lymphoid organs. ABCC1 (via extracellular transport) with GGT5 (via GGG catabolism) establish GGG gradients within lymphoid tissues to position P2RY8-positive lymphocytes at germinal centers in lymphoid follicles and restrict their chemotactic transmigration from blood vessels to the bone marrow parenchyma. Mediates basolateral export of GSH-conjugated R- and S-prostaglandin A2 diastereomers in polarized epithelial cells. The polypeptide is Multidrug resistance-associated protein 1 (Bos taurus (Bovine)).